The following is a 93-amino-acid chain: U12-lycotoxin-Ls1a (93 aa).

The N-terminal stretch at 1–18 is a signal peptide; that stretch reads MKFAVILLFSLVVLTVAS. Positions 19-38 are excised as a propeptide; the sequence is ESVEEVRREIDIEDLPEQQR.

The protein belongs to the neurotoxin 31 family. Contains 5 disulfide bonds. Expressed by the venom gland.

The protein localises to the secreted. This Lycosa singoriensis (Wolf spider) protein is U12-lycotoxin-Ls1a.